Reading from the N-terminus, the 276-residue chain is Palmitoyltransferase ZDHHC22 (276 aa).

The Cytoplasmic portion of the chain corresponds to 1-9; sequence MGKLKLLNT. Residues 10–30 traverse the membrane as a helical segment; it reads IAPAYFYAATVVTFALHFLLF. Over 31 to 45 the chain is Lumenal; that stretch reads TPTIFQSSDVTINPA. The helical transmembrane segment at 46–66 threads the bilayer; that stretch reads MLAHISIFLFLMGNALGNYIM. The Cytoplasmic portion of the chain corresponds to 67 to 131; sequence TIRNPSESAN…NCIGNRNMRY (65 aa). The region spanning 101-137 is the DHHC domain; it reads HFCKVCKKVILKRDHHCFFTGNCIGNRNMRYFIMFSI. Cysteine 117 serves as the catalytic S-palmitoyl cysteine intermediate. A helical transmembrane segment spans residues 132–152; sequence FIMFSIYTSSSCLYSLVIGVA. The Lumenal segment spans residues 153 to 165; it reads YLTIEYSISFENP. The helical transmembrane segment at 166–186 threads the bilayer; the sequence is LTFLTLLPLSTGYFFLGLISG. Residues 187–188 are Cytoplasmic-facing; that stretch reads LQ. A helical transmembrane segment spans residues 189-209; the sequence is FFLVIMLYIWLGIGLVSVGFC. The Lumenal portion of the chain corresponds to 210-276; that stretch reads CQQLLLVARG…WQVYHDHKHD (67 aa).

Belongs to the DHHC palmitoyltransferase family.

The protein resides in the endoplasmic reticulum membrane. It is found in the golgi apparatus membrane. The enzyme catalyses L-cysteinyl-[protein] + hexadecanoyl-CoA = S-hexadecanoyl-L-cysteinyl-[protein] + CoA. Functionally, palmitoyltransferase that could catalyze the addition of palmitate onto various protein substrates and be involved in a variety of cellular processes. This chain is Palmitoyltransferase ZDHHC22 (zdhhc22), found in Danio rerio (Zebrafish).